A 467-amino-acid polypeptide reads, in one-letter code: Dynactin subunit 4 (467 aa).

The residue at position 2 (Ala-2) is an N-acetylalanine. Residues 152-172 (QQLAQKEKVERDRKKLARRRN) adopt a coiled-coil conformation. The residue at position 203 (Ser-203) is a Phosphoserine. A Glycyl lysine isopeptide (Lys-Gly) (interchain with G-Cter in SUMO2) cross-link involves residue Lys-222. Thr-414 carries the post-translational modification Phosphothreonine.

Belongs to the dynactin subunit 4 family. In terms of assembly, subunit of dynactin, a multiprotein complex part of a tripartite complex with dynein and a adapter, such as BICDL1, BICD2 or HOOK3. The dynactin complex is built around ACTR1A/ACTB filament and consists of an actin-related filament composed of a shoulder domain, a pointed end and a barbed end. Its length is defined by its flexible shoulder domain. The soulder is composed of 2 DCTN1 subunits, 4 DCTN2 and 2 DCTN3. The 4 DCNT2 (via N-terminus) bind the ACTR1A filament and act as molecular rulers to determine the length. The pointed end is important for binding dynein-dynactin cargo adapters. Consists of 4 subunits: ACTR10, DCNT4, DCTN5 and DCTN6. The barbed end is composed of a CAPZA1:CAPZB heterodimers, which binds ACTR1A/ACTB filament and dynactin and stabilizes dynactin. Interacts with ATP7B, but not ATP7A, in a copper-dependent manner. Interacts with ANK2; this interaction is required for localization at costameres. Interacts with N4BP2L1.

The protein localises to the cytoplasm. It localises to the cytoskeleton. Its subcellular location is the microtubule organizing center. The protein resides in the centrosome. It is found in the stress fiber. The protein localises to the cell cortex. It localises to the myofibril. Its subcellular location is the sarcomere. Its function is as follows. Part of the dynactin complex that activates the molecular motor dynein for ultra-processive transport along microtubules. This Mus musculus (Mouse) protein is Dynactin subunit 4 (Dctn4).